A 351-amino-acid chain; its full sequence is Fe(3+) ions import ATP-binding protein FbpC (351 aa).

Residues 9–239 (LVLKNINKTF…PNSLFLANFM (231 aa)) form the ABC transporter domain. 41–48 (GPSGCGKT) serves as a coordination point for ATP.

Belongs to the ABC transporter superfamily. Fe(3+) ion importer (TC 3.A.1.10) family. In terms of assembly, the complex is composed of two ATP-binding proteins (FbpC), two transmembrane proteins (FbpB) and a solute-binding protein (FbpA).

It localises to the cell inner membrane. The catalysed reaction is Fe(3+)(out) + ATP + H2O = Fe(3+)(in) + ADP + phosphate + H(+). Functionally, part of the ABC transporter complex FbpABC involved in Fe(3+) ions import. Responsible for energy coupling to the transport system. This Mannheimia succiniciproducens (strain KCTC 0769BP / MBEL55E) protein is Fe(3+) ions import ATP-binding protein FbpC.